Here is a 256-residue protein sequence, read N- to C-terminus: Large ribosomal subunit protein bL28m (256 aa).

A mitochondrion-targeting transit peptide spans 1–55 (MPLHKYPVWLWKRLQLREGICSRLPGHYLRSLEEERTPTPVHYRPHGAKFKINPK).

It belongs to the bacterial ribosomal protein bL28 family. In terms of assembly, component of the mitochondrial large ribosomal subunit (mt-LSU). Mature mammalian 55S mitochondrial ribosomes consist of a small (28S) and a large (39S) subunit. The 28S small subunit contains a 12S ribosomal RNA (12S mt-rRNA) and 30 different proteins. The 39S large subunit contains a 16S rRNA (16S mt-rRNA), a copy of mitochondrial valine transfer RNA (mt-tRNA(Val)), which plays an integral structural role, and 52 different proteins. Interacts with OXA1L. In terms of tissue distribution, found in a variety of normal tissues including spleen, testes, thymus, liver, kidney, brain, adrenal, lung and retinal tissue.

The protein resides in the mitochondrion. The sequence is that of Large ribosomal subunit protein bL28m (MRPL28) from Homo sapiens (Human).